We begin with the raw amino-acid sequence, 504 residues long: D-alanine--D-alanyl carrier protein ligase (504 aa).

Residue 152-153 (TS) participates in ATP binding. Asp-197 is a D-alanine binding site. 292–297 (NTYGPT) serves as a coordination point for ATP. Val-301 contacts D-alanine. Residues Asp-383, 394–397 (YNGR), and Lys-492 each bind ATP. Lys-492 contacts D-alanine.

The protein belongs to the ATP-dependent AMP-binding enzyme family. DltA subfamily.

It localises to the cytoplasm. The catalysed reaction is holo-[D-alanyl-carrier protein] + D-alanine + ATP = D-alanyl-[D-alanyl-carrier protein] + AMP + diphosphate. It participates in cell wall biogenesis; lipoteichoic acid biosynthesis. Its function is as follows. Catalyzes the first step in the D-alanylation of lipoteichoic acid (LTA), the activation of D-alanine and its transfer onto the D-alanyl carrier protein (Dcp) DltC. In an ATP-dependent two-step reaction, forms a high energy D-alanyl-AMP intermediate, followed by transfer of the D-alanyl residue as a thiol ester to the phosphopantheinyl prosthetic group of the Dcp. D-alanylation of LTA plays an important role in modulating the properties of the cell wall in Gram-positive bacteria, influencing the net charge of the cell wall. This Bacillus thuringiensis (strain Al Hakam) protein is D-alanine--D-alanyl carrier protein ligase.